Reading from the N-terminus, the 67-residue chain is UPF0181 protein KPK_1966 (67 aa).

The segment at 48–67 is disordered; it reads EQIVARFEDEDEDQDEDEDD. The span at 55–67 shows a compositional bias: acidic residues; it reads EDEDEDQDEDEDD.

Belongs to the UPF0181 family.

This is UPF0181 protein KPK_1966 from Klebsiella pneumoniae (strain 342).